Consider the following 329-residue polypeptide: 4-hydroxythreonine-4-phosphate dehydrogenase (329 aa).

2 residues coordinate substrate: His-136 and Thr-137. Positions 166, 211, and 266 each coordinate a divalent metal cation. Residues Lys-274, Asn-283, and Arg-292 each coordinate substrate.

It belongs to the PdxA family. In terms of assembly, homodimer. Zn(2+) is required as a cofactor. Requires Mg(2+) as cofactor. It depends on Co(2+) as a cofactor.

It is found in the cytoplasm. The catalysed reaction is 4-(phosphooxy)-L-threonine + NAD(+) = 3-amino-2-oxopropyl phosphate + CO2 + NADH. It participates in cofactor biosynthesis; pyridoxine 5'-phosphate biosynthesis; pyridoxine 5'-phosphate from D-erythrose 4-phosphate: step 4/5. Functionally, catalyzes the NAD(P)-dependent oxidation of 4-(phosphooxy)-L-threonine (HTP) into 2-amino-3-oxo-4-(phosphooxy)butyric acid which spontaneously decarboxylates to form 3-amino-2-oxopropyl phosphate (AHAP). The sequence is that of 4-hydroxythreonine-4-phosphate dehydrogenase from Citrobacter koseri (strain ATCC BAA-895 / CDC 4225-83 / SGSC4696).